We begin with the raw amino-acid sequence, 304 residues long: C-type lectin domain-containing protein 141 (304 aa).

The first 19 residues, 1–19, serve as a signal peptide directing secretion; that stretch reads MRSSSTLLIAFGLFLASMS. Residues 29–100 form a disordered region; sequence GSGGHRPPSS…TTPEPTTTKV (72 aa). Residues 51 to 99 show a composition bias toward low complexity; that stretch reads TKPPKSTSTPSTSTSTPTTTTTTTTTTTTTPTTTTTTTTTTTPEPTTTK.

The sequence is that of C-type lectin domain-containing protein 141 (clec-141) from Caenorhabditis elegans.